The sequence spans 95 residues: Transcription and mRNA export factor ENY2-2 (95 aa).

The protein belongs to the ENY2 family. Component of the nuclear pore complex (NPC)-associated TREX-2 complex (transcription and export complex 2). Component of the SAGA transcription coactivator-HAT complex. Within the SAGA complex, participates in a subcomplex of SAGA called the DUB module (deubiquitination module).

The protein localises to the nucleus. It is found in the nucleoplasm. Its function is as follows. Involved in mRNA export coupled transcription activation by association with both the TREX-2 and the SAGA complexes. The transcription regulatory histone acetylation (HAT) complex SAGA is a multiprotein complex that activates transcription by remodeling chromatin and mediating histone acetylation and deubiquitination. Within the SAGA complex, participates in a subcomplex that specifically deubiquitinates histones. The SAGA complex is recruited to specific gene promoters by activators, where it is required for transcription. The TREX-2 complex functions in docking export-competent ribonucleoprotein particles (mRNPs) to the nuclear entrance of the nuclear pore complex (nuclear basket). TREX-2 participates in mRNA export and accurate chromatin positioning in the nucleus by tethering genes to the nuclear periphery. This chain is Transcription and mRNA export factor ENY2-2 (eny2-2), found in Salmo salar (Atlantic salmon).